Consider the following 84-residue polypeptide: uncharacterized protein (84 aa).

This is an uncharacterized protein from Micrococcus luteus (Micrococcus lysodeikticus).